Consider the following 305-residue polypeptide: UDP-N-acetylenolpyruvoylglucosamine reductase (305 aa).

Residues 22–190 (KVGGAADFFA…LSARFRLQAG (169 aa)) enclose the FAD-binding PCMH-type domain. Residue R169 is part of the active site. S220 serves as the catalytic Proton donor. E290 is an active-site residue.

The protein belongs to the MurB family. Requires FAD as cofactor.

It localises to the cytoplasm. The enzyme catalyses UDP-N-acetyl-alpha-D-muramate + NADP(+) = UDP-N-acetyl-3-O-(1-carboxyvinyl)-alpha-D-glucosamine + NADPH + H(+). It functions in the pathway cell wall biogenesis; peptidoglycan biosynthesis. In terms of biological role, cell wall formation. This Synechococcus sp. (strain RCC307) protein is UDP-N-acetylenolpyruvoylglucosamine reductase.